The primary structure comprises 355 residues: Protein pelota homolog (355 aa).

Belongs to the eukaryotic release factor 1 family. Pelota subfamily. In terms of assembly, monomer. Requires a divalent metal cation as cofactor.

It localises to the cytoplasm. May function in recognizing stalled ribosomes, interact with stem-loop structures in stalled mRNA molecules, and effect endonucleolytic cleavage of the mRNA. May play a role in the release non-functional ribosomes and degradation of damaged mRNAs. Has endoribonuclease activity. The chain is Protein pelota homolog from Halorubrum lacusprofundi (strain ATCC 49239 / DSM 5036 / JCM 8891 / ACAM 34).